We begin with the raw amino-acid sequence, 506 residues long: Galactose/methyl galactoside import ATP-binding protein MglA (506 aa).

2 consecutive ABC transporter domains span residues 14–249 (LTMT…VGRE) and 264–506 (VILE…AKYL). Position 46-53 (46-53 (GENGAGKS)) interacts with ATP.

Belongs to the ABC transporter superfamily. Galactose/methyl galactoside importer (TC 3.A.1.2.3) family. The complex is composed of one ATP-binding protein (MglA), two transmembrane proteins (MglC) and a solute-binding protein (MglB).

The protein localises to the cell inner membrane. The catalysed reaction is D-galactose(out) + ATP + H2O = D-galactose(in) + ADP + phosphate + H(+). The enzyme catalyses methyl beta-D-galactoside(out) + ATP + H2O = methyl beta-D-galactoside(in) + ADP + phosphate + H(+). Functionally, part of the ABC transporter complex MglABC involved in galactose/methyl galactoside import. Responsible for energy coupling to the transport system. In Mannheimia succiniciproducens (strain KCTC 0769BP / MBEL55E), this protein is Galactose/methyl galactoside import ATP-binding protein MglA.